Reading from the N-terminus, the 210-residue chain is Pyridoxine/pyridoxamine 5'-phosphate oxidase (210 aa).

Residues 7–10 (REDY) and lysine 65 contribute to the substrate site. FMN-binding positions include 60-65 (RMVLLK), 75-76 (FT), arginine 81, lysine 82, and glutamine 104. Residues tyrosine 122, arginine 126, and serine 130 each coordinate substrate. FMN is bound by residues 139-140 (QS) and tryptophan 183. 189-191 (RLH) is a substrate binding site. Arginine 193 is an FMN binding site.

The protein belongs to the pyridoxamine 5'-phosphate oxidase family. Homodimer. FMN serves as cofactor.

It catalyses the reaction pyridoxamine 5'-phosphate + O2 + H2O = pyridoxal 5'-phosphate + H2O2 + NH4(+). The catalysed reaction is pyridoxine 5'-phosphate + O2 = pyridoxal 5'-phosphate + H2O2. The protein operates within cofactor metabolism; pyridoxal 5'-phosphate salvage; pyridoxal 5'-phosphate from pyridoxamine 5'-phosphate: step 1/1. It participates in cofactor metabolism; pyridoxal 5'-phosphate salvage; pyridoxal 5'-phosphate from pyridoxine 5'-phosphate: step 1/1. Its function is as follows. Catalyzes the oxidation of either pyridoxine 5'-phosphate (PNP) or pyridoxamine 5'-phosphate (PMP) into pyridoxal 5'-phosphate (PLP). The sequence is that of Pyridoxine/pyridoxamine 5'-phosphate oxidase from Neisseria meningitidis serogroup B (strain ATCC BAA-335 / MC58).